Here is a 448-residue protein sequence, read N- to C-terminus: Phosphoglucosamine mutase (448 aa).

Serine 104 serves as the catalytic Phosphoserine intermediate. Serine 104, aspartate 245, aspartate 247, and aspartate 249 together coordinate Mg(2+). Serine 104 is subject to Phosphoserine.

It belongs to the phosphohexose mutase family. It depends on Mg(2+) as a cofactor. Activated by phosphorylation.

The catalysed reaction is alpha-D-glucosamine 1-phosphate = D-glucosamine 6-phosphate. Its function is as follows. Catalyzes the conversion of glucosamine-6-phosphate to glucosamine-1-phosphate. The polypeptide is Phosphoglucosamine mutase (Caulobacter vibrioides (strain ATCC 19089 / CIP 103742 / CB 15) (Caulobacter crescentus)).